The following is a 785-amino-acid chain: Endonuclease MutS2 (785 aa).

ATP is bound at residue 335–342; the sequence is GPNTGGKT. Residues 710-785 form the Smr domain; it reads LDLRGERYEE…GLGNTVVELR (76 aa). The interval 764 to 785 is disordered; it reads VKSARDGGANEGGLGNTVVELR.

This sequence belongs to the DNA mismatch repair MutS family. MutS2 subfamily. Homodimer. Binds to stalled ribosomes, contacting rRNA.

Endonuclease that is involved in the suppression of homologous recombination and thus may have a key role in the control of bacterial genetic diversity. Its function is as follows. Acts as a ribosome collision sensor, splitting the ribosome into its 2 subunits. Detects stalled/collided 70S ribosomes which it binds and splits by an ATP-hydrolysis driven conformational change. Acts upstream of the ribosome quality control system (RQC), a ribosome-associated complex that mediates the extraction of incompletely synthesized nascent chains from stalled ribosomes and their subsequent degradation. Probably generates substrates for RQC. In Halalkalibacterium halodurans (strain ATCC BAA-125 / DSM 18197 / FERM 7344 / JCM 9153 / C-125) (Bacillus halodurans), this protein is Endonuclease MutS2.